The primary structure comprises 78 residues: Large ribosomal subunit protein bL28 (78 aa).

Belongs to the bacterial ribosomal protein bL28 family.

This is Large ribosomal subunit protein bL28 from Aromatoleum aromaticum (strain DSM 19018 / LMG 30748 / EbN1) (Azoarcus sp. (strain EbN1)).